Consider the following 232-residue polypeptide: BTB/POZ domain-containing protein KCTD11 (232 aa).

Residues 1–49 form the BTB domain; that stretch reads MLGAMFRAGTPMTPNLNPEGGGHYFIDRDGKAFRHILNFLRLGRLDLPL.

In terms of assembly, homopentamer. Interacts with KCTD6 and KCTD21; KCTD11 and KCTD6 or KCTD21 may associate in pentameric assemblies. Component of the BCR(KCTD11) E3 ubiquitin ligase complex, at least composed of CUL3 and KCTD11 and RBX1. Interacts (via BTB domain) with CUL3; initially a 4:4 stoichiometry has been reported, however, electron microscopy revealed pentameric states of the BTB domain.

It functions in the pathway protein modification; protein ubiquitination. Functionally, plays a role as a marker and a regulator of neuronal differentiation; Up-regulated by a variety of neurogenic signals, such as retinoic acid, epidermal growth factor/EGF and NGFB/nerve growth factor. Induces apoptosis, growth arrest and the expression of cyclin-dependent kinase inhibitor CDKN1B. Plays a role as a tumor repressor and inhibits cell growth and tumorigenicity of medulloblastoma (MDB). Acts as a probable substrate-specific adapter for a BCR (BTB-CUL3-RBX1) E3 ubiquitin-protein ligase complex towards HDAC1. Functions as antagonist of the Hedgehog pathway on cell proliferation and differentiation by affecting the nuclear transfer of transcription factor GLI1, thus maintaining cerebellar granule cells in undifferentiated state, this effect probably occurs via HDAC1 down-regulation, keeping GLI1 acetylated and inactive. This chain is BTB/POZ domain-containing protein KCTD11 (KCTD11), found in Bos taurus (Bovine).